The primary structure comprises 393 residues: S-adenosylmethionine synthase (393 aa).

Position 9 (E9) interacts with Mg(2+). ATP is bound at residue H15. Position 17 (D17) interacts with Mg(2+). E43 contacts K(+). L-methionine contacts are provided by E56 and Q99. ATP contacts are provided by residues D167–K169, S235–F238, D246, R252–K253, A269, K273, and K277. An L-methionine-binding site is contributed by D246. K277 provides a ligand contact to L-methionine.

Belongs to the AdoMet synthase family. In terms of assembly, homotetramer; dimer of dimers. The cofactor is Mn(2+). Requires Mg(2+) as cofactor. Co(2+) is required as a cofactor. It depends on K(+) as a cofactor.

It is found in the cytoplasm. It carries out the reaction L-methionine + ATP + H2O = S-adenosyl-L-methionine + phosphate + diphosphate. The protein operates within amino-acid biosynthesis; S-adenosyl-L-methionine biosynthesis; S-adenosyl-L-methionine from L-methionine: step 1/1. Its activity is regulated as follows. Increased activity in the presence of 25 percent acetonitrile, methanol or dimethylformamide. Its function is as follows. Catalyzes the formation of S-adenosylmethionine from methionine and ATP. The chain is S-adenosylmethionine synthase from Acacia koa (Koa tree).